A 180-amino-acid polypeptide reads, in one-letter code: Symerythrin (180 aa).

A cross-link (3-(L-phenylalan-2'-yl)-L-valine (Phe-Val)) is located at residues 17 to 127 (FQDAVSHNNT…RRALETALEV (111 aa)). The 160-residue stretch at 21 to 180 (VSHNNTDANA…RALENLLEVA (160 aa)) folds into the Ferritin-like diiron domain. Fe(3+) is bound by residues Glu37, Glu40, Glu71, Glu128, Glu131, Glu162, and His165.

In terms of assembly, monomer. The cofactor is Fe(3+).

Its subcellular location is the plastid. It localises to the cyanelle. Exhibits oxidase-like and peroxidase-like activities in vitro. The chain is Symerythrin from Cyanophora paradoxa.